A 640-amino-acid chain; its full sequence is Chaperone protein DnaK (640 aa).

Residue Thr-199 is modified to Phosphothreonine; by autocatalysis. The segment covering 606–621 has biased composition (low complexity); it reads QQAAGAGAQQADGTGK. Positions 606–640 are disordered; the sequence is QQAAGAGAQQADGTGKAADDGVVDAEFEEVKEDNK. Positions 626–640 are enriched in acidic residues; sequence GVVDAEFEEVKEDNK.

This sequence belongs to the heat shock protein 70 family.

Functionally, acts as a chaperone. The polypeptide is Chaperone protein DnaK (Cellvibrio japonicus (strain Ueda107) (Pseudomonas fluorescens subsp. cellulosa)).